The sequence spans 131 residues: Profilin-2 (131 aa).

It belongs to the profilin family. In terms of assembly, occurs in many kinds of cells as a complex with monomeric actin in a 1:1 ratio.

It is found in the cytoplasm. It localises to the cytoskeleton. Binds to actin and affects the structure of the cytoskeleton. At high concentrations, profilin prevents the polymerization of actin, whereas it enhances it at low concentrations. By binding to PIP2, it inhibits the formation of IP3 and DG. This Malus domestica (Apple) protein is Profilin-2.